A 186-amino-acid chain; its full sequence is dCTP deaminase (186 aa).

107–112 (KSTYAR) lines the dCTP pocket. The Proton donor/acceptor role is filled by E133. DCTP-binding residues include Q152, Y166, and Q176.

Belongs to the dCTP deaminase family. As to quaternary structure, homotrimer.

It catalyses the reaction dCTP + H2O + H(+) = dUTP + NH4(+). It functions in the pathway pyrimidine metabolism; dUMP biosynthesis; dUMP from dCTP (dUTP route): step 1/2. Its function is as follows. Catalyzes the deamination of dCTP to dUTP. The chain is dCTP deaminase from Campylobacter concisus (strain 13826).